The following is an 86-amino-acid chain: Small ribosomal subunit protein uS17 (86 aa).

The protein belongs to the universal ribosomal protein uS17 family. In terms of assembly, part of the 30S ribosomal subunit.

One of the primary rRNA binding proteins, it binds specifically to the 5'-end of 16S ribosomal RNA. This is Small ribosomal subunit protein uS17 from Chlamydia pneumoniae (Chlamydophila pneumoniae).